The chain runs to 186 residues: Dirigent protein 4 (186 aa).

The signal sequence occupies residues 1 to 20 (MGKNLGLVVSFYLCITFALG). N-linked (GlcNAc...) asparagine glycosylation is found at Asn67, Asn126, Asn169, and Asn180.

The protein belongs to the plant dirigent protein family. In terms of assembly, homodimer.

Its subcellular location is the secreted. The protein localises to the extracellular space. It localises to the apoplast. Its function is as follows. Dirigent proteins impart stereoselectivity on the phenoxy radical-coupling reaction, yielding optically active lignans from two molecules of coniferyl alcohol in the biosynthesis of lignans, flavonolignans, and alkaloids and thus plays a central role in plant secondary metabolism. The protein is Dirigent protein 4 (DIR4) of Arabidopsis thaliana (Mouse-ear cress).